A 709-amino-acid chain; its full sequence is Phosphoribosylformylglycinamidine synthase subunit PurL (709 aa).

His36 is a catalytic residue. Residues Tyr39 and Lys80 each coordinate ATP. Glu82 serves as a coordination point for Mg(2+). Substrate is bound by residues 83 to 86 (SHNH) and Arg105. The active-site Proton acceptor is the His84. Asp106 is a binding site for Mg(2+). Residue Gln226 coordinates substrate. Asp252 serves as a coordination point for Mg(2+). 294 to 296 (ETQ) lines the substrate pocket. The ATP site is built by Asp470 and Gly507. Position 510 (Ser510) interacts with substrate.

This sequence belongs to the FGAMS family. As to quaternary structure, monomer. Part of the FGAM synthase complex composed of 1 PurL, 1 PurQ and 2 PurS subunits.

It is found in the cytoplasm. It catalyses the reaction N(2)-formyl-N(1)-(5-phospho-beta-D-ribosyl)glycinamide + L-glutamine + ATP + H2O = 2-formamido-N(1)-(5-O-phospho-beta-D-ribosyl)acetamidine + L-glutamate + ADP + phosphate + H(+). It participates in purine metabolism; IMP biosynthesis via de novo pathway; 5-amino-1-(5-phospho-D-ribosyl)imidazole from N(2)-formyl-N(1)-(5-phospho-D-ribosyl)glycinamide: step 1/2. Its function is as follows. Part of the phosphoribosylformylglycinamidine synthase complex involved in the purines biosynthetic pathway. Catalyzes the ATP-dependent conversion of formylglycinamide ribonucleotide (FGAR) and glutamine to yield formylglycinamidine ribonucleotide (FGAM) and glutamate. The FGAM synthase complex is composed of three subunits. PurQ produces an ammonia molecule by converting glutamine to glutamate. PurL transfers the ammonia molecule to FGAR to form FGAM in an ATP-dependent manner. PurS interacts with PurQ and PurL and is thought to assist in the transfer of the ammonia molecule from PurQ to PurL. This Saccharolobus islandicus (strain Y.N.15.51 / Yellowstone #2) (Sulfolobus islandicus) protein is Phosphoribosylformylglycinamidine synthase subunit PurL.